A 1785-amino-acid polypeptide reads, in one-letter code: Mellein synthase (1785 aa).

The interval M1–E36 is disordered. The span at A8–S27 shows a compositional bias: low complexity. The 426-residue stretch at Y39–Q464 folds into the Ketosynthase family 3 (KS3) domain. Residues C211, H346, and H386 each act as for beta-ketoacyl synthase activity in the active site. The interval V575–V888 is malonyl-CoA:ACP transacylase (MAT) domain. S661 acts as the For malonyltransferase activity in catalysis. The N-terminal hotdog fold stretch occupies residues N933 to N1047. Residues N933–K1206 form the PKS/mFAS DH domain. The dehydratase (DH) domain stretch occupies residues M935–T1203. H965 (proton acceptor; for dehydratase activity) is an active-site residue. The C-terminal hotdog fold stretch occupies residues G1062–K1206. D1123 serves as the catalytic Proton donor; for dehydratase activity. The tract at residues G1418–R1608 is ketoreductase (KR) domain. Over residues Q1681–P1698 the composition is skewed to polar residues. The interval Q1681–S1701 is disordered. Residues P1706 to F1781 enclose the Carrier domain. Position 1741 is an O-(pantetheine 4'-phosphoryl)serine (S1741).

It functions in the pathway secondary metabolite biosynthesis. Functionally, polyketide synthase that produces (R)-mellein, a secondary metabolite that inhibits the germination of wheat (Triticum aestivum) and barrel medic (Medicago truncatula) seeds. Condensates 1 acetate starter unit and 4 extender malonate units. The nascent pentaketide intermediate then undergoes an aldol cyclization and is aromatized via dehydration. The (R)-O-methylmellein isolated from P.nodorum is most likely to be derived from (R)-mellein via an additional methylation at the hydroxyl group. Interestingly, no O-methyltransferase gene is encoded in the vicinity of MLNS on the chromosome. Thus, the O-methylation is likely to be catalyzed by an endogenous O-methyltransferase encoded elsewhere in the genome of P.nodorum. The sequence is that of Mellein synthase from Phaeosphaeria nodorum (strain SN15 / ATCC MYA-4574 / FGSC 10173) (Glume blotch fungus).